A 378-amino-acid chain; its full sequence is Flap endonuclease 1 (378 aa).

Residues Met-1–Arg-105 are N-domain. A Mg(2+)-binding site is contributed by Asp-34. Positions 47 and 71 each coordinate DNA. Asp-87, Glu-156, Glu-158, Asp-177, and Asp-179 together coordinate Mg(2+). The interval Glu-120–His-251 is I-domain. Glu-156 contacts DNA. DNA contacts are provided by Gly-229 and Asp-231. Position 231 (Asp-231) interacts with Mg(2+). The interval Val-337–Phe-345 is interaction with PCNA. Residues Ala-356–Lys-367 are compositionally biased toward low complexity. Positions Ala-356–Arg-378 are disordered. Residues Thr-368–Arg-378 show a composition bias toward basic residues.

The protein belongs to the XPG/RAD2 endonuclease family. FEN1 subfamily. In terms of assembly, interacts with PCNA. Three molecules of FEN1 bind to one PCNA trimer with each molecule binding to one PCNA monomer. PCNA stimulates the nuclease activity without altering cleavage specificity. Mg(2+) serves as cofactor. Phosphorylated. Phosphorylation upon DNA damage induces relocalization to the nuclear plasma.

The protein localises to the nucleus. The protein resides in the nucleolus. It is found in the nucleoplasm. Its subcellular location is the mitochondrion. Functionally, structure-specific nuclease with 5'-flap endonuclease and 5'-3' exonuclease activities involved in DNA replication and repair. During DNA replication, cleaves the 5'-overhanging flap structure that is generated by displacement synthesis when DNA polymerase encounters the 5'-end of a downstream Okazaki fragment. It enters the flap from the 5'-end and then tracks to cleave the flap base, leaving a nick for ligation. Also involved in the long patch base excision repair (LP-BER) pathway, by cleaving within the apurinic/apyrimidinic (AP) site-terminated flap. Acts as a genome stabilization factor that prevents flaps from equilibrating into structures that lead to duplications and deletions. Also possesses 5'-3' exonuclease activity on nicked or gapped double-stranded DNA, and exhibits RNase H activity. Also involved in replication and repair of rDNA and in repairing mitochondrial DNA. In Eremothecium gossypii (strain ATCC 10895 / CBS 109.51 / FGSC 9923 / NRRL Y-1056) (Yeast), this protein is Flap endonuclease 1.